The chain runs to 462 residues: tRNA(Ile)-lysidine synthase (462 aa).

27 to 32 contacts ATP; it reads SGGPDS.

It belongs to the tRNA(Ile)-lysidine synthase family.

The protein localises to the cytoplasm. The catalysed reaction is cytidine(34) in tRNA(Ile2) + L-lysine + ATP = lysidine(34) in tRNA(Ile2) + AMP + diphosphate + H(+). Its function is as follows. Ligates lysine onto the cytidine present at position 34 of the AUA codon-specific tRNA(Ile) that contains the anticodon CAU, in an ATP-dependent manner. Cytidine is converted to lysidine, thus changing the amino acid specificity of the tRNA from methionine to isoleucine. The chain is tRNA(Ile)-lysidine synthase from Clostridioides difficile (strain 630) (Peptoclostridium difficile).